The sequence spans 270 residues: Release factor glutamine methyltransferase (270 aa).

S-adenosyl-L-methionine contacts are provided by residues 112–116 (GTGSG), aspartate 135, tryptophan 162, and asparagine 178. 178 to 181 (NPPY) provides a ligand contact to substrate.

It belongs to the protein N5-glutamine methyltransferase family. PrmC subfamily.

It carries out the reaction L-glutaminyl-[peptide chain release factor] + S-adenosyl-L-methionine = N(5)-methyl-L-glutaminyl-[peptide chain release factor] + S-adenosyl-L-homocysteine + H(+). Functionally, methylates the class 1 translation termination release factors RF1/PrfA and RF2/PrfB on the glutamine residue of the universally conserved GGQ motif. The protein is Release factor glutamine methyltransferase of Bordetella pertussis (strain Tohama I / ATCC BAA-589 / NCTC 13251).